A 316-amino-acid chain; its full sequence is Glutamyl endopeptidase (316 aa).

The N-terminal stretch at 1 to 30 (MVSKKSVKRGLITGLIGISIYSLGMHPAQA) is a signal peptide. A propeptide spanning residues 31-94 (APSPHTPVSS…SPAKAPYSIK (64 aa)) is cleaved from the precursor. A disulfide bridge links Cys126 with Cys142. Active-site charge relay system residues include His141 and Ser261. Cys275 and Cys279 are oxidised to a cystine.

Belongs to the peptidase S1B family.

It is found in the secreted. It carries out the reaction Preferential cleavage: Glu-|-Xaa, Asp-|-Xaa.. Functionally, specific for hydrolysis of peptide bonds on the carboxyl side of acidic amino acid residues, with a strong preference for Glu. The sequence is that of Glutamyl endopeptidase (blaSE) from Bacillus licheniformis (strain ATCC 14580 / DSM 13 / JCM 2505 / CCUG 7422 / NBRC 12200 / NCIMB 9375 / NCTC 10341 / NRRL NRS-1264 / Gibson 46).